Here is a 196-residue protein sequence, read N- to C-terminus: GTP cyclohydrolase-2 (196 aa).

49 to 53 (RVHSE) lines the GTP pocket. Cysteine 54, cysteine 65, and cysteine 67 together coordinate Zn(2+). Residues glutamine 70, 92-94 (EGR), and threonine 114 each bind GTP. The active-site Proton acceptor is the aspartate 126. Arginine 128 serves as the catalytic Nucleophile. Positions 149 and 154 each coordinate GTP.

This sequence belongs to the GTP cyclohydrolase II family. In terms of assembly, homodimer. The cofactor is Zn(2+).

It catalyses the reaction GTP + 4 H2O = 2,5-diamino-6-hydroxy-4-(5-phosphoribosylamino)-pyrimidine + formate + 2 phosphate + 3 H(+). It functions in the pathway cofactor biosynthesis; riboflavin biosynthesis; 5-amino-6-(D-ribitylamino)uracil from GTP: step 1/4. In terms of biological role, catalyzes the conversion of GTP to 2,5-diamino-6-ribosylamino-4(3H)-pyrimidinone 5'-phosphate (DARP), formate and pyrophosphate. The protein is GTP cyclohydrolase-2 of Shigella dysenteriae serotype 1 (strain Sd197).